A 79-amino-acid chain; its full sequence is Acyl carrier protein (79 aa).

One can recognise a Carrier domain in the interval S2–V77. Position 37 is an O-(pantetheine 4'-phosphoryl)serine (S37).

It belongs to the acyl carrier protein (ACP) family. 4'-phosphopantetheine is transferred from CoA to a specific serine of apo-ACP by AcpS. This modification is essential for activity because fatty acids are bound in thioester linkage to the sulfhydryl of the prosthetic group.

Its subcellular location is the cytoplasm. Its pathway is lipid metabolism; fatty acid biosynthesis. In terms of biological role, carrier of the growing fatty acid chain in fatty acid biosynthesis. This Xanthomonas axonopodis pv. citri (strain 306) protein is Acyl carrier protein.